Consider the following 212-residue polypeptide: Thymidylate kinase (212 aa).

10 to 17 (GLEGAGKT) serves as a coordination point for ATP.

The protein belongs to the thymidylate kinase family.

It carries out the reaction dTMP + ATP = dTDP + ADP. Its function is as follows. Phosphorylation of dTMP to form dTDP in both de novo and salvage pathways of dTTP synthesis. This chain is Thymidylate kinase, found in Yersinia enterocolitica serotype O:8 / biotype 1B (strain NCTC 13174 / 8081).